The sequence spans 1203 residues: Plasma membrane calcium-transporting ATPase 4 (1203 aa).

The Cytoplasmic segment spans residues 1–92; it reads MTNPSGHNLP…NMIPPKKPKT (92 aa). Position 13 is a phosphoserine (serine 13). A helical membrane pass occupies residues 93–113; that stretch reads FLELVWEALQDVTLIILEIAA. At 114-150 the chain is on the extracellular side; it reads IISLVLSFYRPPGGENEICGHIVSNPEEDEEGETGWI. A helical membrane pass occupies residues 151-171; the sequence is EGAAILASVIIVVFVTAFNDW. Topologically, residues 172–356 are cytoplasmic; that stretch reads SKEKQFRGLQ…KEKSVLQGKL (185 aa). Residues 294–319 form a disordered region; it reads DDEKKKKGKKQGVSENRNKAKTQDGV. Serine 328 and serine 334 each carry phosphoserine. Residues 330 to 349 form a disordered region; sequence EGLDSEEKEKKASKGPKKEK. Residues 334–349 are compositionally biased toward basic and acidic residues; the sequence is SEEKEKKASKGPKKEK. The helical transmembrane segment at 357-376 threads the bilayer; the sequence is TRLAVQIGKAGLIMSILTVL. The Extracellular portion of the chain corresponds to 377–409; that stretch reads ILILYFVVDNFVIQRRAWLPECTPVYIQYFVKF. The helical transmembrane segment at 410-427 threads the bilayer; that stretch reads FIIGVTVLVVAVPEGLPL. The Cytoplasmic portion of the chain corresponds to 428 to 840; that stretch reads AVTISLAYSV…MWGRNVYDSI (413 aa). Residue aspartate 465 is the 4-aspartylphosphate intermediate of the active site. Residues aspartate 785 and aspartate 789 each contribute to the Mg(2+) site. The helical transmembrane segment at 841–860 threads the bilayer; the sequence is SKFLQFQLTVNVVAVIVAFS. The Extracellular portion of the chain corresponds to 861-870; sequence GACITQDSPL. Residues 871–891 traverse the membrane as a helical segment; it reads KAVQMLWVNLIMDTFASLALA. At 892-911 the chain is on the cytoplasmic side; that stretch reads TEPPTDSLLRRRPYGRNKPL. Residues 912–934 form a helical membrane-spanning segment; the sequence is ISRTMMKNILGHAVYQLGIVFLL. Over 935–952 the chain is Extracellular; it reads VFAGDKLFDIDSGRKAPL. Residues 953–974 traverse the membrane as a helical segment; sequence NSPPSQHYTIVFNTFVLMQLFN. Over 975-993 the chain is Cytoplasmic; that stretch reads EINSRKIHGEKNVFAGVYR. A helical membrane pass occupies residues 994–1015; sequence NIIFCSVVLGTFFCQILIVEVG. The Extracellular segment spans residues 1016 to 1025; it reads GKPFSCTNLT. Residues 1026-1047 form a helical membrane-spanning segment; the sequence is MEQWMWCLFIGIGELLWGQVIS. Over 1048 to 1203 the chain is Cytoplasmic; sequence AIPTKSLKFL…SPLQSQETPV (156 aa). 2 positions are modified to phosphoserine: serine 1064 and serine 1070. Positions 1086-1103 are calmodulin-binding subdomain A; it reads LRRGQILWVRGLNRIQTQ. Residue threonine 1102 is modified to Phosphothreonine; by PKC. At glutamine 1103 the chain carries Phosphoserine. Residues 1104 to 1113 are calmodulin-binding subdomain B; that stretch reads IRVVKVFHSF. A phosphoserine mark is found at arginine 1114, aspartate 1115, isoleucine 1126, and serine 1144.

The protein belongs to the cation transport ATPase (P-type) (TC 3.A.3) family. Type IIB subfamily. As to quaternary structure, interacts with PDZD11. Interacts with SLC35G1 and STIM1. Interacts with calmodulin. In terms of tissue distribution, ubiquitously expressed. Not detected in liver. The highest levels are found in uterus and stomach. Isoform XA is found in uterus, brain, stomach, small intestine, colon and pancreas. Isoform XB is found in uterus, skeletal muscle, lung, kidney, spleen, stomach, small intestine and pancreas. Isoform ZA is found in testis and isoform ZB is found in testis and heart.

It localises to the cell membrane. The protein localises to the cell projection. Its subcellular location is the cilium. It is found in the flagellum membrane. It catalyses the reaction Ca(2+)(in) + ATP + H2O = Ca(2+)(out) + ADP + phosphate + H(+). Its activity is regulated as follows. Activated by calcium/calmodulin. In terms of biological role, calcium/calmodulin-regulated and magnesium-dependent enzyme that catalyzes the hydrolysis of ATP coupled with the transport of calcium out of the cell. By regulating sperm cell calcium homeostasis, may play a role in sperm motility. This is Plasma membrane calcium-transporting ATPase 4 from Rattus norvegicus (Rat).